Here is a 124-residue protein sequence, read N- to C-terminus: uncharacterized protein (124 aa).

This is an uncharacterized protein from Lactobacillus acidophilus.